Reading from the N-terminus, the 201-residue chain is Large ribosomal subunit protein uL4 (201 aa).

Positions 44-73 (RAQKSRAEVKASRKKPWRQKGTGRARAGSV) are disordered. Positions 55–66 (SRKKPWRQKGTG) are enriched in basic residues.

The protein belongs to the universal ribosomal protein uL4 family. In terms of assembly, part of the 50S ribosomal subunit.

In terms of biological role, one of the primary rRNA binding proteins, this protein initially binds near the 5'-end of the 23S rRNA. It is important during the early stages of 50S assembly. It makes multiple contacts with different domains of the 23S rRNA in the assembled 50S subunit and ribosome. Its function is as follows. Forms part of the polypeptide exit tunnel. This chain is Large ribosomal subunit protein uL4, found in Hamiltonella defensa subsp. Acyrthosiphon pisum (strain 5AT).